The following is an 836-amino-acid chain: Protein translocase subunit SecA (836 aa).

ATP contacts are provided by residues glutamine 85, glycine 103–threonine 107, and aspartate 492. The disordered stretch occupies residues arginine 786–asparagine 817. A compositionally biased stretch (basic and acidic residues) spans aspartate 801–arginine 816. Zn(2+) is bound by residues cysteine 820, cysteine 822, cysteine 831, and cysteine 832.

The protein belongs to the SecA family. In terms of assembly, monomer and homodimer. Part of the essential Sec protein translocation apparatus which comprises SecA, SecYEG and auxiliary proteins SecDF. Other proteins may also be involved. It depends on Zn(2+) as a cofactor.

It localises to the cell membrane. The protein localises to the cytoplasm. It catalyses the reaction ATP + H2O + cellular proteinSide 1 = ADP + phosphate + cellular proteinSide 2.. Part of the Sec protein translocase complex. Interacts with the SecYEG preprotein conducting channel. Has a central role in coupling the hydrolysis of ATP to the transfer of proteins into and across the cell membrane, serving as an ATP-driven molecular motor driving the stepwise translocation of polypeptide chains across the membrane. This Clostridium tetani (strain Massachusetts / E88) protein is Protein translocase subunit SecA.